The chain runs to 287 residues: MSIVNLSSYHFATIEDTAAWRPFVTERCNALGLKGTILLAPEGINLFVAGTRENTDAFIHYIRHDALFEGKFVDLQFKESLSDKQPFTRMLVKLKREIITMKKPAIRPELGRAPFVDAPTLKHWLDRGHDDQGRPVVMLDTRNAFEVDVGTFDNALDYRITKFSEFPEVIEQNRADLEGKTVVSFCTGGIRCEKAAIHMKEVGIENVYQLEGGILKYFEEVGGAHYHGDCFVFDYRTALNPQLEPSKTTQCFGCRAVVPPQAQESPLYVAGKTCPECHPDSKAARAA.

The Rhodanese domain maps to 132-226; the sequence is QGRPVVMLDT…YFEEVGGAHY (95 aa). Cys186 acts as the Cysteine persulfide intermediate in catalysis.

This sequence belongs to the TrhO family.

The catalysed reaction is uridine(34) in tRNA + AH2 + O2 = 5-hydroxyuridine(34) in tRNA + A + H2O. Its function is as follows. Catalyzes oxygen-dependent 5-hydroxyuridine (ho5U) modification at position 34 in tRNAs. This Paraburkholderia phytofirmans (strain DSM 17436 / LMG 22146 / PsJN) (Burkholderia phytofirmans) protein is tRNA uridine(34) hydroxylase.